Reading from the N-terminus, the 77-residue chain is Inhibitor of histone-like protein HU (77 aa).

Interacts with host homodimeric histone-like protein (HU) hupA; thereby replacing dsDNA from the HU-DNA complex.

Its function is as follows. Acts as a host growth inhibitor by inhibiting DNA-binding of microbial histone-like protein HU, thereby preventing chromosome segregation and causing filamentous cell morphology and growth defects in the host. This is Inhibitor of histone-like protein HU from Bacillus phage SP01 (Bacteriophage SP01).